A 371-amino-acid chain; its full sequence is Peptidyl-prolyl cis-trans isomerase D (371 aa).

The 165-residue stretch at 8–172 folds into the PPIase cyclophilin-type domain; sequence FFDIAIGGQL…EPVVIADCGQ (165 aa). A disordered region spans residues 175 to 202; it reads SDDPFLAERTSTDGDPYEDYPDDEDQEL. A compositionally biased stretch (acidic residues) spans 189–201; that stretch reads DPYEDYPDDEDQE. TPR repeat units lie at residues 212-245, 265-303, and 308-341; these read AKTI…LDVH, APLL…LELS, and AKAY…LPED.

It belongs to the cyclophilin-type PPIase family. PPIase D subfamily.

The protein localises to the cytoplasm. The enzyme catalyses [protein]-peptidylproline (omega=180) = [protein]-peptidylproline (omega=0). Functionally, PPIases accelerate the folding of proteins. It catalyzes the cis-trans isomerization of proline imidic peptide bonds in oligopeptides. The sequence is that of Peptidyl-prolyl cis-trans isomerase D (Cyp40) from Amanita muscaria (Fly agaric).